The chain runs to 1081 residues: WD repeat-containing protein 64 (1081 aa).

14 WD repeats span residues 102 to 152, 153 to 198, 199 to 265, 266 to 314, 315 to 356, 357 to 400, 401 to 444, 445 to 488, 489 to 532, 533 to 631, 632 to 740, 741 to 803, 804 to 857, and 858 to 895; these read DPIA…ATQK, GLIT…GSSQ, ENYF…VLDS, KNFK…LEDN, LPVR…NIST, KPVG…TLSL, LQVF…TRMI, QDTK…ETGL, QVYQ…FGSG, QEMK…LIVE, RNFS…PQSS, KGSK…EGRL, LKDM…EKKF, and KQLL…RLWH. Residues 726-745 show a composition bias toward low complexity; that stretch reads CSSSQCESSKGPQSSKGSKQ. The tract at residues 726–757 is disordered; it reads CSSSQCESSKGPQSSKGSKQSIHDSEVKGEQT. Residues 746–756 are compositionally biased toward basic and acidic residues; that stretch reads SIHDSEVKGEQ. The tract at residues 1036 to 1060 is disordered; the sequence is DSSDGITGKKKGGHVQREKAPRRRS. Residues 1043–1060 show a composition bias toward basic residues; the sequence is GKKKGGHVQREKAPRRRS.

The sequence is that of WD repeat-containing protein 64 (WDR64) from Homo sapiens (Human).